Reading from the N-terminus, the 117-residue chain is MDNKAARLRRATRARKQIKELGANRLVVHRTPRHIYAQLIAPNGSEVLAAASTAEKSVREGLKSTGNVDAAKVVGKTIAERAIEKGVKNVSFDRSGFKYHGRVAALADAAREAGLQF.

The protein belongs to the universal ribosomal protein uL18 family. Part of the 50S ribosomal subunit; part of the 5S rRNA/L5/L18/L25 subcomplex. Contacts the 5S and 23S rRNAs.

Functionally, this is one of the proteins that bind and probably mediate the attachment of the 5S RNA into the large ribosomal subunit, where it forms part of the central protuberance. This is Large ribosomal subunit protein uL18 from Idiomarina loihiensis (strain ATCC BAA-735 / DSM 15497 / L2-TR).